We begin with the raw amino-acid sequence, 482 residues long: MASFSAETNSTDLLSQPWNEPPVILSMVILSLTFLLGLPGNGLVLWVAGLKMQRTVNTIWFLHLTLADLLCCLSLPFSLAHLALQGQWPYGRFLCKLIPSIIVLNMFASVFLLTAISLDRCLVVFKPIWCQNHRNVGMACSICGCIWVVAFVMCIPVFVYREIFTTDNHNRCGYKFGLSSSLDYPDFYGDPLENRSLENIVQPPGEMNDRLDPSSFQTNDHPWTVPTVFQPQTFQRPSADSLPRGSARLTSQNLYSNVFKPADVVSPKIPSGFPIEDHETSPLDNSDAFLSTHLKLFPSASSNSFYESELPQGFQDYYNLGQFTDDDQVPTPLVAITITRLVVGFLLPSVIMIACYSFIVFRMQRGRFAKSQSKTFRVAVVVVAVFLVCWTPYHIFGVLSLLTDPETPLGKTLMSWDHVCIALASANSCFNPFLYALLGKDFRKKARQSIQGILEAAFSEELTRSTHCPSNNVISERNSTTV.

Residues 1–23 are Extracellular-facing; the sequence is MASFSAETNSTDLLSQPWNEPPV. An N-linked (GlcNAc...) asparagine glycan is attached at Asn-9. The helical transmembrane segment at 24 to 46 threads the bilayer; sequence ILSMVILSLTFLLGLPGNGLVLW. The Cytoplasmic segment spans residues 47-57; sequence VAGLKMQRTVN. A helical transmembrane segment spans residues 58–80; that stretch reads TIWFLHLTLADLLCCLSLPFSLA. The Extracellular portion of the chain corresponds to 81–96; it reads HLALQGQWPYGRFLCK. A disulfide bridge connects residues Cys-95 and Cys-172. Residues 97–118 traverse the membrane as a helical segment; it reads LIPSIIVLNMFASVFLLTAISL. Topologically, residues 119-139 are cytoplasmic; that stretch reads DRCLVVFKPIWCQNHRNVGMA. Residues 140–160 form a helical membrane-spanning segment; sequence CSICGCIWVVAFVMCIPVFVY. Residues 161–340 lie on the Extracellular side of the membrane; that stretch reads REIFTTDNHN…TPLVAITITR (180 aa). 2 positions are modified to sulfotyrosine: Tyr-174 and Tyr-184. N-linked (GlcNAc...) asparagine glycosylation occurs at Asn-194. The O-linked (GalNAc...) serine glycan is linked to Ser-266. The residue at position 318 (Tyr-318) is a Sulfotyrosine. A helical transmembrane segment spans residues 341-360; the sequence is LVVGFLLPSVIMIACYSFIV. The Cytoplasmic segment spans residues 361-377; sequence FRMQRGRFAKSQSKTFR. A helical membrane pass occupies residues 378-400; sequence VAVVVVAVFLVCWTPYHIFGVLS. Over 401 to 417 the chain is Extracellular; sequence LLTDPETPLGKTLMSWD. A helical membrane pass occupies residues 418–438; the sequence is HVCIALASANSCFNPFLYALL. The Cytoplasmic segment spans residues 439-482; sequence GKDFRKKARQSIQGILEAAFSEELTRSTHCPSNNVISERNSTTV. Ser-459 is subject to Phosphoserine. Thr-463 carries the post-translational modification Phosphothreonine.

Belongs to the G-protein coupled receptor 1 family. As to quaternary structure, interacts with VGF-derived peptide TLQP-21. In terms of processing, among the sulfation sites Tyr-174 is essential for binding of C3a anaphylatoxin. Post-translationally, O-glycosylated. In terms of tissue distribution, widely expressed in several differentiated hematopoietic cell lines, in the lung, spleen, ovary, placenta, small intestine, throughout the brain, heart, and endothelial cells. Mostly expressed in lymphoid tissues.

It is found in the cell membrane. Receptor for the chemotactic and inflammatory peptide anaphylatoxin C3a. This receptor stimulates chemotaxis, granule enzyme release and superoxide anion production. The chain is C3a anaphylatoxin chemotactic receptor (C3AR1) from Homo sapiens (Human).